Reading from the N-terminus, the 427-residue chain is Serine--tRNA ligase (427 aa).

L-serine is bound at residue 232–234 (TAE). Position 263 to 265 (263 to 265 (RSE)) interacts with ATP. An L-serine-binding site is contributed by Glu-286. 350 to 353 (EISS) is an ATP binding site. Ser-385 provides a ligand contact to L-serine.

This sequence belongs to the class-II aminoacyl-tRNA synthetase family. Type-1 seryl-tRNA synthetase subfamily. Homodimer. The tRNA molecule binds across the dimer.

Its subcellular location is the cytoplasm. The catalysed reaction is tRNA(Ser) + L-serine + ATP = L-seryl-tRNA(Ser) + AMP + diphosphate + H(+). The enzyme catalyses tRNA(Sec) + L-serine + ATP = L-seryl-tRNA(Sec) + AMP + diphosphate + H(+). Its pathway is aminoacyl-tRNA biosynthesis; selenocysteinyl-tRNA(Sec) biosynthesis; L-seryl-tRNA(Sec) from L-serine and tRNA(Sec): step 1/1. Functionally, catalyzes the attachment of serine to tRNA(Ser). Is also able to aminoacylate tRNA(Sec) with serine, to form the misacylated tRNA L-seryl-tRNA(Sec), which will be further converted into selenocysteinyl-tRNA(Sec). This Lacticaseibacillus casei (strain BL23) (Lactobacillus casei) protein is Serine--tRNA ligase.